Here is a 433-residue protein sequence, read N- to C-terminus: Homogentisate 1,2-dioxygenase (433 aa).

Catalysis depends on histidine 288, which acts as the Proton acceptor. Fe cation-binding residues include histidine 331 and glutamate 337. Residues tyrosine 346 and histidine 367 each coordinate homogentisate. Histidine 367 contacts Fe cation.

Belongs to the homogentisate dioxygenase family. In terms of assembly, hexamer; dimer of trimers. Fe cation is required as a cofactor.

It catalyses the reaction homogentisate + O2 = 4-maleylacetoacetate + H(+). It functions in the pathway amino-acid degradation; L-phenylalanine degradation; acetoacetate and fumarate from L-phenylalanine: step 4/6. Functionally, involved in the catabolism of homogentisate (2,5-dihydroxyphenylacetate or 2,5-OH-PhAc), a central intermediate in the degradation of phenylalanine and tyrosine. Catalyzes the oxidative ring cleavage of the aromatic ring of homogentisate to yield maleylacetoacetate. The chain is Homogentisate 1,2-dioxygenase from Pseudomonas putida (strain ATCC 700007 / DSM 6899 / JCM 31910 / BCRC 17059 / LMG 24140 / F1).